Reading from the N-terminus, the 278-residue chain is 2-dehydro-3-deoxyphosphooctonate aldolase (278 aa).

Belongs to the KdsA family.

The protein localises to the cytoplasm. It catalyses the reaction D-arabinose 5-phosphate + phosphoenolpyruvate + H2O = 3-deoxy-alpha-D-manno-2-octulosonate-8-phosphate + phosphate. Its pathway is carbohydrate biosynthesis; 3-deoxy-D-manno-octulosonate biosynthesis; 3-deoxy-D-manno-octulosonate from D-ribulose 5-phosphate: step 2/3. It participates in bacterial outer membrane biogenesis; lipopolysaccharide biosynthesis. This is 2-dehydro-3-deoxyphosphooctonate aldolase from Bartonella quintana (strain Toulouse) (Rochalimaea quintana).